The primary structure comprises 187 residues: Peptidyl-tRNA hydrolase (187 aa).

Y14 contributes to the tRNA binding site. The active-site Proton acceptor is H19. TRNA contacts are provided by Y64, N66, and N112.

It belongs to the PTH family. As to quaternary structure, monomer.

The protein localises to the cytoplasm. The enzyme catalyses an N-acyl-L-alpha-aminoacyl-tRNA + H2O = an N-acyl-L-amino acid + a tRNA + H(+). Its function is as follows. Hydrolyzes ribosome-free peptidyl-tRNAs (with 1 or more amino acids incorporated), which drop off the ribosome during protein synthesis, or as a result of ribosome stalling. In terms of biological role, catalyzes the release of premature peptidyl moieties from peptidyl-tRNA molecules trapped in stalled 50S ribosomal subunits, and thus maintains levels of free tRNAs and 50S ribosomes. The chain is Peptidyl-tRNA hydrolase from Clostridium acetobutylicum (strain ATCC 824 / DSM 792 / JCM 1419 / IAM 19013 / LMG 5710 / NBRC 13948 / NRRL B-527 / VKM B-1787 / 2291 / W).